The primary structure comprises 88 residues: Small ribosomal subunit protein bS18 (88 aa).

Over residues 1 to 11 (MTTANTTAKDN) the composition is skewed to low complexity. The segment at 1-21 (MTTANTTAKDNAATKKRGRKA) is disordered.

It belongs to the bacterial ribosomal protein bS18 family. Part of the 30S ribosomal subunit. Forms a tight heterodimer with protein bS6.

Functionally, binds as a heterodimer with protein bS6 to the central domain of the 16S rRNA, where it helps stabilize the platform of the 30S subunit. This Thermoanaerobacter pseudethanolicus (strain ATCC 33223 / 39E) (Clostridium thermohydrosulfuricum) protein is Small ribosomal subunit protein bS18.